Reading from the N-terminus, the 92-residue chain is Small ribosomal subunit protein uS19 (92 aa).

Belongs to the universal ribosomal protein uS19 family.

Functionally, protein S19 forms a complex with S13 that binds strongly to the 16S ribosomal RNA. This Buchnera aphidicola subsp. Acyrthosiphon pisum (strain 5A) protein is Small ribosomal subunit protein uS19.